The following is a 462-amino-acid chain: UDP-N-acetylmuramoylalanine--D-glutamate ligase (462 aa).

An ATP-binding site is contributed by 125–131 (GSDGKTT).

It belongs to the MurCDEF family.

It localises to the cytoplasm. The enzyme catalyses UDP-N-acetyl-alpha-D-muramoyl-L-alanine + D-glutamate + ATP = UDP-N-acetyl-alpha-D-muramoyl-L-alanyl-D-glutamate + ADP + phosphate + H(+). Its pathway is cell wall biogenesis; peptidoglycan biosynthesis. In terms of biological role, cell wall formation. Catalyzes the addition of glutamate to the nucleotide precursor UDP-N-acetylmuramoyl-L-alanine (UMA). This is UDP-N-acetylmuramoylalanine--D-glutamate ligase from Clostridium acetobutylicum (strain ATCC 824 / DSM 792 / JCM 1419 / IAM 19013 / LMG 5710 / NBRC 13948 / NRRL B-527 / VKM B-1787 / 2291 / W).